Reading from the N-terminus, the 1705-residue chain is MAAANAPIIMKEVLTLPSVGIGQQFITFTNVTMESDKYICVRETAPQNSVVIIDMNMPMQPLRRPITADSALMNPNSRILALKAQVPGTTQDHLQIFNIEAKAKLKSHQMPEQVAFWKWITPKMLGLVTQTSVYHWSIEGDSEPVKMFDRTANLANNQIINYKCSPNEKWLVLIGIAPGSPERPQLVKGNMQLFSVDQQRSQALEAHAASFAQFKVPGNENPSILISFASKSFNAGQITSKLHVIELGAQPGKPSFTKKQADLFFPPDFADDFPVAMQVSHKFNLIYVITKLGLLFVYDLETASAIYRNRISPDPIFLTSEASSVGGFYAINRRGQVLLATVNEATIIPFISGQLNNLELAVNLAKRGNLPGAENLVVQRFQELFAQTKYKEAAELAAESPQGILRTPDTVAKFQSVPVQAGQTPPLLQYFGTLLTRGKLNSYESLELSRLVVNQNKKNLLENWLAEDKLECSEELGDLVKTVDNDLALKIYIKARATPKVVAAFAERREFDKILIYSKQVGYTPDYMFLLQTILRTDPQGAVNFALMMSQMEGGCPVDYNTITDLFLQRNLIREATAFLLDVLKPNLPEHAFLQTKVLEINLVTFPNVADAILANGMFSHYDRPRVAQLCEKAGLYIQSLKHYSELPDIKRVIVNTHAIEPQALVEFFGTLSSEWAMECMKDLLLVNLRGNLQIIVQACKEYCEQLGVDACIKLFEQFKSYEGLYFFLGSYLSMSEDPEIHFKYIEAAAKTGQIKEVERVTRESNFYDAEKTKNFLMEAKLPDARPLINVCDRFGFVPDLTHYLYTNNMLRYIEGYVQKVNPGNAPLVVGQLLDDECPEDFIKGLILSVRSLLPVEPLVAECEKRNRLRLLTQFLEHLVSEGSQDVHVHNALGKIIIDSNNNPEHFLTTNPYYDSKVVGKYCEKRDPTLAVVAYRRGQCDEELINVTNKNSLFKLQARYVVERMDGDLWEKVLTEENEYRRQLIDQVVSTALPESKSPEQVSAAVKAFMTADLPHELIELLEKIVLQNSAFSGNFNLQNLLILTAIKADPSRVMDYINRLDNFDGPAVGEVAVDAQLYEEAFAIFKKFNLNVQAVNVLLDNVRSIERAVEFAFRVEEDAVWSQVAKAQLREGLVSDAIESFIRADDTTQFLEVIRASEDTNVYDDLVRYLLMVRQKVKEPKVDSELIYAYAKIERLGEIEEFILMPNVANLQHVGDRLYDEALYEAAKIIYAFISNWAKLAVTLVKLQQFQGAVDAARKANSAKTWKEVCFACVDAEEFRLAQICGLNIIIQVDDLEEVSEYYQNRGCFNELISLMESGLGLERAHMGIFTELGVLYARYRYEKLMEHIKLFSTRLNIPKLIRACDEQQHWQELTYLYIQYDEFDNAATTVMNHSPEAWEHMQFKDIVAKVANVELYYKAVHFYLQEHPDIINDLLNVLALRLDHTRVVDIMRKAGHLRLIKPYMVAVQSNNVSAVNEALNEIYAEEEDYDRLRESIDLHDSFDQIGLAQKIEKHELVEMRRVAAYIYKKAGRWKQSIALSKKDNMYKDCMETASQSGDHDLAEQLLVYFIEQGKKECFATCLFVCYDLIRPDVALELAWINNMIDFAFPYLLQFIREYSGKVDELIKDKLEAQKEVKAKEQEEKDVMSQQNMYAQLLPLALPAPPMPGMGGGGYGPPPQMGGMPGMSGMPPMPPYGMPPMGGY.

An N-acetylalanine modification is found at Ala2. The segment at Ala2–Tyr492 is globular terminal domain. 7 WD40-like repeat regions span residues Phe25–Thr67, Ala68–Gln113, Val114–Ala155, Asn156–Glu205, Ala206–Ala270, Asp271–Asp314, and Pro315–Asn343. Residues Glu462–Asp478 form a binding site for the uncoating ATPase, involved in lattice disassembly region. Positions Ile493–Arg536 are flexible linker. The segment at Thr537 to Pro648 is distal segment. The interval Thr537 to Tyr1705 is heavy chain arm. CHCR repeat units follow at residues Gln551–Val697, Cys700–Phe842, Ile847–Asp986, Leu993–Ala1138, Phe1142–Ala1283, Leu1288–Asn1434, and Leu1437–Phe1580. The interval Val653–Tyr1705 is proximal segment. Positions Ala1227–Lys1536 are involved in binding clathrin light chain. Residues Ala1564–Tyr1705 are trimerization.

It belongs to the clathrin heavy chain family. As to quaternary structure, clathrin triskelions, composed of 3 heavy chains and 3 light chains, are the basic subunits of the clathrin coat. Interacts with SCYL2B.

It is found in the cytoplasmic vesicle membrane. It localises to the membrane. The protein resides in the coated pit. Clathrin is the major protein of the polyhedral coat of coated pits and vesicles. Mediates endocytosis and is required for a correct polar distribution of PIN auxin transporters. The sequence is that of Clathrin heavy chain 1 from Arabidopsis thaliana (Mouse-ear cress).